An 88-amino-acid polypeptide reads, in one-letter code: DASH complex subunit HSK3 (88 aa).

Positions 1-15 are enriched in low complexity; sequence MSSRGSGANAASRQS. Residues 1–24 are disordered; it reads MSSRGSGANAASRQSMTASGGAVK.

The protein belongs to the DASH complex HSK3 family. Component of the DASH complex consisting of ASK1, DAD1, DAD2, DAD3, DAD4, DAM1, DUO1, HSK3, SPC19 and SPC34, with a stoichiometry of one copy of each subunit per complex. Multiple DASH complexes oligomerize to form a ring that encircles spindle microtubules and organizes the rod-like NDC80 complexes of the outer kinetochore. DASH complex oligomerization strengthens microtubule attachments. On cytoplasmic microtubules, DASH complexes appear to form patches instead of rings.

The protein resides in the nucleus. It localises to the cytoplasm. Its subcellular location is the cytoskeleton. It is found in the spindle. The protein localises to the chromosome. The protein resides in the centromere. It localises to the kinetochore. Functionally, component of the DASH complex that connects microtubules with kinetochores and couples microtubule depolymerisation to chromosome movement; it is involved in retrieving kinetochores to the spindle poles before their re-orientation on the spindle in early mitosis and allows microtubule depolymerization to pull chromosomes apart and resist detachment during anaphase. Kinetochores, consisting of a centromere-associated inner segment and a microtubule-contacting outer segment, play a crucial role in chromosome segregation by mediating the physical connection between centromeric DNA and microtubules. Kinetochores also serve as an input point for the spindle assembly checkpoint, which delays anaphase until all chromosomes have bioriented on the mitotic spindle. In Chaetomium thermophilum (strain DSM 1495 / CBS 144.50 / IMI 039719) (Thermochaetoides thermophila), this protein is DASH complex subunit HSK3.